We begin with the raw amino-acid sequence, 87 residues long: Small ribosomal subunit protein bS20 (87 aa).

Residues 1-11 (MANIKSAKKRA) show a composition bias toward basic residues. The tract at residues 1 to 27 (MANIKSAKKRAVQSEKRRQHNASQRSM) is disordered.

The protein belongs to the bacterial ribosomal protein bS20 family.

Binds directly to 16S ribosomal RNA. The chain is Small ribosomal subunit protein bS20 from Actinobacillus succinogenes (strain ATCC 55618 / DSM 22257 / CCUG 43843 / 130Z).